A 468-amino-acid polypeptide reads, in one-letter code: 6-phosphogluconate dehydrogenase, decarboxylating (468 aa).

NADP(+)-binding positions include 9–14 (GLAVMG), 32–34 (NRS), 73–75 (VKA), and N101. Substrate-binding positions include N101 and 127 to 129 (SGG). The active-site Proton acceptor is the K182. Position 185 to 186 (185 to 186 (HN)) interacts with substrate. E189 (proton donor) is an active-site residue. Substrate is bound by residues Y190, K259, R286, R444, and H450.

This sequence belongs to the 6-phosphogluconate dehydrogenase family. As to quaternary structure, homodimer.

The catalysed reaction is 6-phospho-D-gluconate + NADP(+) = D-ribulose 5-phosphate + CO2 + NADPH. The protein operates within carbohydrate degradation; pentose phosphate pathway; D-ribulose 5-phosphate from D-glucose 6-phosphate (oxidative stage): step 3/3. Catalyzes the oxidative decarboxylation of 6-phosphogluconate to ribulose 5-phosphate and CO(2), with concomitant reduction of NADP to NADPH. This is 6-phosphogluconate dehydrogenase, decarboxylating (gnd) from Staphylococcus epidermidis (strain ATCC 35984 / DSM 28319 / BCRC 17069 / CCUG 31568 / BM 3577 / RP62A).